The chain runs to 1384 residues: Hepatocyte growth factor receptor (1384 aa).

Positions 1-24 (MKAPAVLAPGILVLLFTFVQKSNG) are cleaved as a signal peptide. Residues 25 to 933 (ECKEALVKSR…VIVQPDQNFT (909 aa)) are Extracellular-facing. In terms of domain architecture, Sema spans 27 to 516 (KEALVKSRMN…TGKKITKIPL (490 aa)). An N-linked (GlcNAc...) asparagine glycan is attached at asparagine 45. Intrachain disulfides connect cysteine 95–cysteine 101, cysteine 98–cysteine 160, cysteine 133–cysteine 141, and cysteine 173–cysteine 176. The N-linked (GlcNAc...) asparagine glycan is linked to asparagine 106. Residue asparagine 149 is glycosylated (N-linked (GlcNAc...) asparagine). 2 N-linked (GlcNAc...) asparagine glycosylation sites follow: asparagine 203 and asparagine 359. Disulfide bonds link cysteine 299–cysteine 364 and cysteine 386–cysteine 398. Residues asparagine 400 and asparagine 406 are each glycosylated (N-linked (GlcNAc...) asparagine). Cystine bridges form between cysteine 521/cysteine 539, cysteine 527/cysteine 562, cysteine 530/cysteine 546, and cysteine 542/cysteine 552. 3 IPT/TIG domains span residues 564-656 (PTIY…FSYV), 658-740 (PIIT…FIYR), and 743-837 (PIVY…LIYV). A glycan (O-linked (Man) threonine) is linked at threonine 583. 2 N-linked (GlcNAc...) asparagine glycosylation sites follow: asparagine 608 and asparagine 636. O-linked (Man) threonine glycans are attached at residues threonine 677 and threonine 762. N-linked (GlcNAc...) asparagine glycosylation is found at asparagine 786, asparagine 880, and asparagine 931. The chain crosses the membrane as a helical span at residues 934–956 (GLIVGVVSVSIILLLLLGLFLWL). Topologically, residues 957–1384 (KKRKQIKDLG…NVSGEDDDDT (428 aa)) are cytoplasmic. Serine 967 is subject to Phosphoserine. The residue at position 978 (threonine 978) is a Phosphothreonine. Phosphoserine is present on residues serine 991, serine 998, and serine 1001. Phosphotyrosine is present on tyrosine 1004. The region spanning 1079–1346 (VHFNEVIGRG…RIAAIFSAFI (268 aa)) is the Protein kinase domain. ATP contacts are provided by residues 1085-1093 (IGRGHFGCV) and lysine 1111. Catalysis depends on aspartate 1205, which acts as the Proton acceptor. An interaction with RANBP9 region spans residues 1213–1382 (LDEKFTVKVA…QENVSGEDDD (170 aa)). The residue at position 1231 (tyrosine 1231) is a Phosphotyrosine. Phosphotyrosine; by autocatalysis is present on residues tyrosine 1235 and tyrosine 1236. A Phosphothreonine modification is found at threonine 1290. The interval 1321-1360 (WHPKAELRPSFSELVSRIAAIFSAFIGEHYVHVNATYVNV) is interaction with MUC20. 2 positions are modified to phosphotyrosine; by autocatalysis: tyrosine 1350 and tyrosine 1357. Tyrosine 1366 is modified (phosphotyrosine).

It belongs to the protein kinase superfamily. Tyr protein kinase family. As to quaternary structure, heterodimer made of an alpha chain (50 kDa) and a beta chain (145 kDa) which are disulfide linked. Binds PLXNB1. Interacts when phosphorylated with downstream effectors including STAT3, PIK3R1, SRC, PCLG1, GRB2 and GAB1. Interacts with SPSB1, SPSB2 and SPSB4. Interacts with INPP5D/SHIP1. When phosphorylated at Tyr-1357, interacts with INPPL1/SHIP2. Interacts with RANBP9 and RANBP10, as well as SPSB1, SPSB2, SPSB3 and SPSB4. SPSB1 binding occurs in the presence and in the absence of HGF, however HGF treatment has a positive effect on this interaction. Interacts with MUC20; prevents interaction with GRB2 and suppresses hepatocyte growth factor-induced cell proliferation. Interacts with GRB10. Interacts with PTPN1 and PTPN2. Interacts with HSP90AA1 and HSP90AB1; the interaction suppresses MET kinase activity. Interacts with tensin TNS3. Interacts (when phosphorylated) with tensin TNS4 (via SH2 domain); the interaction increases MET protein stability by inhibiting MET endocytosis and subsequent lysosomal degradation. Post-translationally, autophosphorylated in response to ligand binding on Tyr-1235 and Tyr-1236 in the kinase domain leading to further phosphorylation of Tyr-1350 and Tyr-1357 in the C-terminal multifunctional docking site. Dephosphorylated by PTPRJ at Tyr-1350 and Tyr-1366. Dephosphorylated by PTPN1 and PTPN2. In terms of processing, ubiquitinated. Ubiquitination by CBL regulates the receptor stability and activity through proteasomal degradation. O-mannosylation of IPT/TIG domains by TMEM260 is required for protein maturation. O-mannosylated residues are composed of single mannose glycans that are not elongated or modified.

The protein resides in the membrane. It carries out the reaction L-tyrosyl-[protein] + ATP = O-phospho-L-tyrosyl-[protein] + ADP + H(+). In its inactive state, the C-terminal tail interacts with the catalytic domain and inhibits the kinase activity. Upon ligand binding, the C-terminal tail is displaced and becomes phosphorylated, thus increasing the kinase activity. Its function is as follows. Receptor tyrosine kinase that transduces signals from the extracellular matrix into the cytoplasm by binding to hepatocyte growth factor/HGF ligand. Regulates many physiological processes including proliferation, scattering, morphogenesis and survival. Ligand binding at the cell surface induces autophosphorylation of MET on its intracellular domain that provides docking sites for downstream signaling molecules. Following activation by ligand, interacts with the PI3-kinase subunit PIK3R1, PLCG1, SRC, GRB2, STAT3 or the adapter GAB1. Recruitment of these downstream effectors by MET leads to the activation of several signaling cascades including the RAS-ERK, PI3 kinase-AKT, or PLCgamma-PKC. The RAS-ERK activation is associated with the morphogenetic effects while PI3K/AKT coordinates prosurvival effects. During embryonic development, MET signaling plays a role in gastrulation, development and migration of muscles and neuronal precursors, angiogenesis and kidney formation. In adults, participates in wound healing as well as organ regeneration and tissue remodeling. Also promotes differentiation and proliferation of hematopoietic cells. In Ovis aries (Sheep), this protein is Hepatocyte growth factor receptor (MET).